We begin with the raw amino-acid sequence, 447 residues long: MEAYIRQKRATPGMVQASDLQLVRPMSGVNRNGREVHAYDGPMQFMMSPTNPDQIMPTSPVGPVPTVAVGGTGPNVTATSITTTPTSPYSDSTMEKLTPSSQDSEDEESTPVDVLPLPASTKSPANGGAGGAILYDRPTVDGHHLLSHSAPISPALNNNNHTHHTNSSSGNVKSSEDSGTPPSGGGGGAPDTEGDVIGPIEQWVTQPAAQGVLYKCRITRDRKGMDRGLFPIYYLHLERDYGKKLFCLAGRKRKKSKTSNYIISCDPTDLSRQADGFVGKLRSNVFGTTFFVYDSGTKNDAAAPRLDLAVVIYDTNILGFKGPRNMTVLLPGMTEDDQRVQISSVDDQQGLLDCWKSKNMDNVVELHNKTPIWNDETQSYVLNFHGRVTQASVKNFQLVHDSDPEYIVMQFGRTADDIFTMDFRYPLCAFQAFAIALSSFDGKLACE.

Composition is skewed to low complexity over residues 71-92 (GTGP…YSDS) and 157-169 (NNNN…NSSS). The interval 71-196 (GTGPNVTATS…GGAPDTEGDV (126 aa)) is disordered.

It belongs to the TUB family.

It is found in the cytoplasm. It localises to the nucleus. The chain is Protein king tubby from Anopheles gambiae (African malaria mosquito).